A 1033-amino-acid chain; its full sequence is Isoleucine--tRNA ligase (1033 aa).

Residues 47–57 carry the 'HIGH' region motif; it reads PTANGLPHVGH. The 'KMSKS' region signature appears at 590–594; the sequence is KMSKS. An ATP-binding site is contributed by K593.

It belongs to the class-I aminoacyl-tRNA synthetase family. IleS type 2 subfamily. Monomer. The cofactor is Zn(2+).

The protein localises to the cytoplasm. The catalysed reaction is tRNA(Ile) + L-isoleucine + ATP = L-isoleucyl-tRNA(Ile) + AMP + diphosphate. Its function is as follows. Catalyzes the attachment of isoleucine to tRNA(Ile). As IleRS can inadvertently accommodate and process structurally similar amino acids such as valine, to avoid such errors it has two additional distinct tRNA(Ile)-dependent editing activities. One activity is designated as 'pretransfer' editing and involves the hydrolysis of activated Val-AMP. The other activity is designated 'posttransfer' editing and involves deacylation of mischarged Val-tRNA(Ile). In Bacillus thuringiensis (strain Al Hakam), this protein is Isoleucine--tRNA ligase.